The primary structure comprises 345 residues: 3-hydroxy-5-methyl-1-naphthoate 3-O-methyltransferase (345 aa).

Position 205 (aspartate 205) interacts with S-adenosyl-L-methionine. Histidine 252 (proton acceptor) is an active-site residue.

This sequence belongs to the class I-like SAM-binding methyltransferase superfamily. Cation-independent O-methyltransferase family.

It carries out the reaction 3-hydroxy-5-methyl-1-naphthoate + S-adenosyl-L-methionine = 3-methoxy-5-methyl-1-naphthoate + S-adenosyl-L-homocysteine + H(+). It functions in the pathway antibiotic biosynthesis. Its activity is regulated as follows. Inhibited by different divalent cations, such as Mg(2+), Mn(2+), Fe(2+), Cu(2+) and Zn(2+). In terms of biological role, O-methyltransferase that mediates the formation of 3-methoxy-5-methyl-1-naphthoate from 3-hydroxy-5-methyl-1-naphthoate in the biosynthesis of the antitumor antibiotic azinomycin B. This chain is 3-hydroxy-5-methyl-1-naphthoate 3-O-methyltransferase, found in Streptomyces sahachiroi.